Consider the following 499-residue polypeptide: Basic immunoglobulin-like variable motif-containing protein (499 aa).

Disordered regions lie at residues 1 to 29, 153 to 172, and 428 to 465; these read MPNI…RNNL, LKSR…ERKA, and GNLR…RSFS. Residues 153-162 are compositionally biased toward polar residues; that stretch reads LKSRSGVNKQ. The segment covering 444–453 has biased composition (basic and acidic residues); it reads PKSESEDNVS.

The protein belongs to the BIVM family.

It localises to the cytoplasm. Its subcellular location is the nucleus. This chain is Basic immunoglobulin-like variable motif-containing protein (bivm), found in Xenopus tropicalis (Western clawed frog).